Reading from the N-terminus, the 438-residue chain is MTTYHFIGIKGTGMSALAQILHDSGEKVQGSDFEKRFFTQEALEQKNITILPFSKENIKEDYTIIAGNAFSDDHIEIQKAKELGCKFYRYHEFLGEWLKQYTSIAVTGAHGKTSTTGLLSHVLKSAYPISYLIGDGTGNGHVDSEYFVFEACEYRRHFLKYEPDYAIMTNIDFDHPDYFTSLDDVVDAFQSMADRVKKCIVACGDDEQLQGIHTKVPVIYYGFNDSNDFQAQNVVETANGTEFDVFVRNTYYDHFIIPTYGNHTVLNALAVIAICHYEGISVEHMKQLDTFEGVKRRFTEKEIGSQIVIDDYAHHPKEISVTIESARKKYPNKNVVAIFQPHTFTRTKTFLKEFADSLNEADNVYLCDIFKSAREDSGQLTINDLQKLIPNSQLLSLKETEVLQEFKDSVLIFMGAGDIQKFQAAYEETTTKSTNFQD.

Residue 108-114 (GAHGKTS) participates in ATP binding.

Belongs to the MurCDEF family.

Its subcellular location is the cytoplasm. The catalysed reaction is UDP-N-acetyl-alpha-D-muramate + L-alanine + ATP = UDP-N-acetyl-alpha-D-muramoyl-L-alanine + ADP + phosphate + H(+). It functions in the pathway cell wall biogenesis; peptidoglycan biosynthesis. In terms of biological role, cell wall formation. The protein is UDP-N-acetylmuramate--L-alanine ligase of Oceanobacillus iheyensis (strain DSM 14371 / CIP 107618 / JCM 11309 / KCTC 3954 / HTE831).